Consider the following 642-residue polypeptide: Threonine--tRNA ligase (642 aa).

The 61-residue stretch at 1–61 (MPVITITNGL…MQDSKLDIIT (61 aa)) folds into the TGS domain. Positions 243 to 534 (DHRKIGQQLD…LIEEYAGFFP (292 aa)) are catalytic. Zn(2+) is bound by residues Cys-334, His-385, and His-511.

It belongs to the class-II aminoacyl-tRNA synthetase family. Homodimer. Zn(2+) serves as cofactor.

The protein resides in the cytoplasm. It catalyses the reaction tRNA(Thr) + L-threonine + ATP = L-threonyl-tRNA(Thr) + AMP + diphosphate + H(+). In terms of biological role, catalyzes the attachment of threonine to tRNA(Thr) in a two-step reaction: L-threonine is first activated by ATP to form Thr-AMP and then transferred to the acceptor end of tRNA(Thr). Also edits incorrectly charged L-seryl-tRNA(Thr). In Baumannia cicadellinicola subsp. Homalodisca coagulata, this protein is Threonine--tRNA ligase.